We begin with the raw amino-acid sequence, 424 residues long: Deoxyguanosinetriphosphate triphosphohydrolase-like protein (424 aa).

Residues Met1–Val27 form a disordered region. Basic and acidic residues predominate over residues Asp8–Lys18. An HD domain is found at Arg67–Ser217.

Belongs to the dGTPase family. Type 2 subfamily.

This is Deoxyguanosinetriphosphate triphosphohydrolase-like protein (dgt) from Corynebacterium glutamicum (strain ATCC 13032 / DSM 20300 / JCM 1318 / BCRC 11384 / CCUG 27702 / LMG 3730 / NBRC 12168 / NCIMB 10025 / NRRL B-2784 / 534).